A 335-amino-acid chain; its full sequence is tRNA (guanine(6)-N2)-methyltransferase (335 aa).

The 104-residue stretch at glutamate 47 to leucine 150 folds into the THUMP domain. S-adenosyl-L-methionine contacts are provided by residues serine 195–threonine 197, aspartate 243–alanine 244, and asparagine 260.

This sequence belongs to the methyltransferase superfamily. In terms of assembly, monomer in solution.

Its subcellular location is the cytoplasm. It catalyses the reaction guanosine(6) in tRNA + S-adenosyl-L-methionine = N(2)-methylguanosine(6) in tRNA + S-adenosyl-L-homocysteine + H(+). In terms of biological role, S-adenosyl-L-methionine-dependent methyltransferase that catalyzes the methylation of the guanosine nucleotide at position 6 (m2G6) in tRNA(Phe). The protein is tRNA (guanine(6)-N2)-methyltransferase of Thermus thermophilus (strain ATCC BAA-163 / DSM 7039 / HB27).